The sequence spans 203 residues: Linker for activation of T-cells family member 2 (203 aa).

At 1–6 the chain is on the extracellular side; sequence MSAELE. Residues 7–27 traverse the membrane as a helical; Signal-anchor for type III membrane protein segment; that stretch reads LLWPVSGLLLLLLGATAWLCV. S-palmitoyl cysteine attachment occurs at residues Cys-26 and Cys-29. Residues 28-203 lie on the Cytoplasmic side of the membrane; the sequence is HCSRPGVKRN…NGDVAAAENI (176 aa). Tyr-59 is subject to Phosphotyrosine. Ser-60 and Ser-95 each carry phosphoserine. Residues Tyr-139, Tyr-160, and Tyr-192 each carry the phosphotyrosine modification. Positions 171-203 are disordered; sequence ESKRTMGAPMSLSGSPDEEPDYVNGDVAAAENI.

In terms of assembly, when phosphorylated, interacts with GRB2. May also interact with SOS1, GAB1 and CBL. In terms of processing, phosphorylated on tyrosines following cross-linking of BCR in B-cells, high affinity IgG receptor (FCGR1) in myeloid cells, or high affinity IgE receptor (FCER1) in mast cells; which induces the recruitment of GRB2. In terms of tissue distribution, strongly expressed in testis. Expressed in heart, spleen and lung. Present in B-cells and mast cells (at protein level).

It localises to the cell membrane. Involved in FCER1 (high affinity immunoglobulin epsilon receptor)-mediated signaling in mast cells. May also be involved in BCR (B-cell antigen receptor)-mediated signaling in B-cells and FCGR1 (high affinity immunoglobulin gamma Fc receptor I)-mediated signaling in myeloid cells. Couples activation of these receptors and their associated kinases with distal intracellular events through the recruitment of GRB2. This chain is Linker for activation of T-cells family member 2 (Lat2), found in Mus musculus (Mouse).